Consider the following 308-residue polypeptide: MFADSAVACVISALRAVGVDSPLMSELVPRLLFVHAHPDDETLTTGGTIAHYVRRGADVRVVTCTLGEEGEVIGEQYAQLAVDHADQLGGYRIAELTAALAALGVDAPHFLGGPGHWRDSGMADTPARHQPRFVDADMAEAAGLLAAILDDFRPHVVVTYDPDGGYGHPDHVQTHRVTTAAVERAQWQVPKFYWTVMSKSGMGDAFAVARDVPEEWLQVSVDDVPFLYTDDRIDAVVDVSDSIEAKVAAMRAHATQISVAPNGQSCALSNNIAMPIPGVEHYVLVSGAPGPRDARGWETDLLAGVNLA.

His37, Asp40, and His171 together coordinate Zn(2+).

This sequence belongs to the MshB deacetylase family. It depends on Zn(2+) as a cofactor.

The catalysed reaction is 1D-myo-inositol 2-acetamido-2-deoxy-alpha-D-glucopyranoside + H2O = 1D-myo-inositol 2-amino-2-deoxy-alpha-D-glucopyranoside + acetate. In terms of biological role, catalyzes the deacetylation of 1D-myo-inositol 2-acetamido-2-deoxy-alpha-D-glucopyranoside (GlcNAc-Ins) in the mycothiol biosynthesis pathway. This Mycobacterium sp. (strain JLS) protein is 1D-myo-inositol 2-acetamido-2-deoxy-alpha-D-glucopyranoside deacetylase.